Reading from the N-terminus, the 329-residue chain is Sex comb on midleg-like protein 1 (329 aa).

A phosphoserine mark is found at serine 138 and serine 238. An SAM domain is found at 258-325 (WSVEAVVLFL…YYIDRLKQGK (68 aa)).

The protein belongs to the SCM family.

The protein resides in the nucleus. In terms of biological role, putative Polycomb group (PcG) protein. PcG proteins act by forming multiprotein complexes, which are required to maintain the transcriptionally repressive state of homeotic genes throughout development. May be involved in spermatogenesis during sexual maturation. The chain is Sex comb on midleg-like protein 1 (SCML1) from Nomascus leucogenys (Northern white-cheeked gibbon).